Consider the following 297-residue polypeptide: Formylmethanofuran--tetrahydromethanopterin formyltransferase (297 aa).

It belongs to the FTR family. Homotetramer.

Its subcellular location is the cytoplasm. The catalysed reaction is N-formylmethanofuran + 5,6,7,8-tetrahydromethanopterin + H(+) = N(5)-formyl-5,6,7,8-tetrahydromethanopterin + methanofuran. It participates in one-carbon metabolism; methanogenesis from CO(2); 5,10-methenyl-5,6,7,8-tetrahydromethanopterin from CO(2): step 2/3. Its function is as follows. Catalyzes the reversible transfer of a formyl group from formylmethanofuran (formyl-MFR) to tetrahydromethanopterin (H(4)MPT) to produce 5-formyl tetrahydromethanopterin (5-formyl-H(4)MPT) and methanofuran (MFR). The protein is Formylmethanofuran--tetrahydromethanopterin formyltransferase of Methanosarcina mazei (strain ATCC BAA-159 / DSM 3647 / Goe1 / Go1 / JCM 11833 / OCM 88) (Methanosarcina frisia).